A 778-amino-acid polypeptide reads, in one-letter code: Ent-sandaracopimaradiene synthase KSL3, chloroplastic (778 aa).

A chloroplast-targeting transit peptide spans 1-35; it reads MLLTSTNTLKISSQRKEWEAKDLTGMFHGQVNGRV. Mg(2+) contacts are provided by D527, E531, N670, D671, and D678. Residues 527-531 carry the DDXXD motif motif; the sequence is DDFFE.

The protein belongs to the terpene synthase family. The cofactor is Mg(2+).

It localises to the plastid. Its subcellular location is the chloroplast. The enzyme catalyses ent-copalyl diphosphate = ent-sandaracopimara-8(14),15-diene + diphosphate. The catalysed reaction is ent-copalyl diphosphate = ent-(12E)-labda-8(17),12,14-triene + diphosphate. The protein operates within secondary metabolite biosynthesis; terpenoid biosynthesis. Diterpene cyclase involved in the biosynthesis of labdane-related diterpenoids (LRDs) natural products. Catalyzes the cyclization of ent-CDP into ent-sandaracopimaradiene as a major, and ent-pimaradiene and ent-labdatriene as minor products. The sequence is that of Ent-sandaracopimaradiene synthase KSL3, chloroplastic from Ricinus communis (Castor bean).